The following is a 308-amino-acid chain: Cyclin-D2-1 (308 aa).

A disordered region spans residues 286–308 (EGLSYDSSSPPPPKRRKRSPPGT). The span at 298–308 (PKRRKRSPPGT) shows a compositional bias: basic residues.

The protein belongs to the cyclin family. Cyclin D subfamily.

The polypeptide is Cyclin-D2-1 (CYCD2-1) (Oryza sativa subsp. japonica (Rice)).